We begin with the raw amino-acid sequence, 159 residues long: Transcription elongation factor GreA (159 aa).

This sequence belongs to the GreA/GreB family.

Necessary for efficient RNA polymerase transcription elongation past template-encoded arresting sites. The arresting sites in DNA have the property of trapping a certain fraction of elongating RNA polymerases that pass through, resulting in locked ternary complexes. Cleavage of the nascent transcript by cleavage factors such as GreA or GreB allows the resumption of elongation from the new 3'terminus. GreA releases sequences of 2 to 3 nucleotides. The chain is Transcription elongation factor GreA from Buchnera aphidicola subsp. Cinara cedri (strain Cc).